A 475-amino-acid polypeptide reads, in one-letter code: Bystin (475 aa).

2 stretches are compositionally biased toward basic residues: residues 1–12 (MGKDVKKVHKLR) and 29–41 (KPHK…RKKK). Disordered stretches follow at residues 1 to 57 (MGKD…ESVI) and 106 to 149 (DFID…QFGV). Acidic residues-rich tracts occupy residues 45–54 (ENDTGIDETE) and 107–119 (FIDD…DADQ).

Belongs to the bystin family.

Its subcellular location is the nucleus. The protein resides in the nucleolus. Required for processing of 20S pre-rRNA precursor and biogenesis of 40S ribosomal subunits. The sequence is that of Bystin (bysl) from Dictyostelium discoideum (Social amoeba).